Reading from the N-terminus, the 134-residue chain is Nif-regulating protein A (134 aa).

The C4-type; atypical zinc finger occupies 3-36 (CLECGLVYIVSGLKVPEKISVRVFVNRIEHPFTH).

As to quaternary structure, interacts with the general archaeal transcription factors TBPs.

In terms of biological role, involved in nitrogen regulation. Enhances the transcription of the nitrogen fixation (nif) operon under nitrogen-limited conditions. Acts by binding to the nifH promoter region. In Methanosarcina mazei (strain ATCC BAA-159 / DSM 3647 / Goe1 / Go1 / JCM 11833 / OCM 88) (Methanosarcina frisia), this protein is Nif-regulating protein A.